Reading from the N-terminus, the 37-residue chain is Cytochrome b6-f complex subunit 5 (37 aa).

A helical membrane pass occupies residues Leu-5–Ala-25.

It belongs to the PetG family. As to quaternary structure, the 4 large subunits of the cytochrome b6-f complex are cytochrome b6, subunit IV (17 kDa polypeptide, PetD), cytochrome f and the Rieske protein, while the 4 small subunits are PetG, PetL, PetM and PetN. The complex functions as a dimer.

It localises to the plastid. The protein resides in the chloroplast thylakoid membrane. Its function is as follows. Component of the cytochrome b6-f complex, which mediates electron transfer between photosystem II (PSII) and photosystem I (PSI), cyclic electron flow around PSI, and state transitions. PetG is required for either the stability or assembly of the cytochrome b6-f complex. This Stigeoclonium helveticum (Green alga) protein is Cytochrome b6-f complex subunit 5.